A 54-amino-acid chain; its full sequence is Large ribosomal subunit protein bL33B (54 aa).

Belongs to the bacterial ribosomal protein bL33 family.

This chain is Large ribosomal subunit protein bL33B, found in Myxococcus xanthus (strain DK1622).